Consider the following 206-residue polypeptide: FMN-dependent NADH:quinone oxidoreductase 4 (206 aa).

FMN is bound by residues Ser10 and 136–139; that span reads SSGG.

It belongs to the azoreductase type 1 family. As to quaternary structure, homodimer. FMN is required as a cofactor.

The enzyme catalyses 2 a quinone + NADH + H(+) = 2 a 1,4-benzosemiquinone + NAD(+). It catalyses the reaction N,N-dimethyl-1,4-phenylenediamine + anthranilate + 2 NAD(+) = 2-(4-dimethylaminophenyl)diazenylbenzoate + 2 NADH + 2 H(+). Its function is as follows. Quinone reductase that provides resistance to thiol-specific stress caused by electrophilic quinones. Functionally, also exhibits azoreductase activity. Catalyzes the reductive cleavage of the azo bond in aromatic azo compounds to the corresponding amines. In Pseudomonas fluorescens (strain ATCC BAA-477 / NRRL B-23932 / Pf-5), this protein is FMN-dependent NADH:quinone oxidoreductase 4.